The following is a 313-amino-acid chain: Protein phosphatase PTC7 homolog fig (313 aa).

The region spanning 47-307 (KEPLTDLQLR…DDITVILASL (261 aa)) is the PPM-type phosphatase domain. Mn(2+)-binding residues include Asp-83, Gly-84, and Asp-229.

Belongs to the PP2C family. Mg(2+) is required as a cofactor. Requires Mn(2+) as cofactor.

It catalyses the reaction O-phospho-L-seryl-[protein] + H2O = L-seryl-[protein] + phosphate. It carries out the reaction O-phospho-L-threonyl-[protein] + H2O = L-threonyl-[protein] + phosphate. This Drosophila virilis (Fruit fly) protein is Protein phosphatase PTC7 homolog fig.